The following is a 77-amino-acid chain: Translation initiation factor IF-1, chloroplastic (77 aa).

Residues 1–71 form the S1-like domain; the sequence is MKEQKWIHEG…TRGRIIYRLR (71 aa).

It belongs to the IF-1 family. In terms of assembly, component of the 30S ribosomal translation pre-initiation complex which assembles on the 30S ribosome in the order IF-2 and IF-3, IF-1 and N-formylmethionyl-tRNA(fMet); mRNA recruitment can occur at any time during PIC assembly.

Its subcellular location is the plastid. The protein localises to the chloroplast. Functionally, one of the essential components for the initiation of protein synthesis. Stabilizes the binding of IF-2 and IF-3 on the 30S subunit to which N-formylmethionyl-tRNA(fMet) subsequently binds. Helps modulate mRNA selection, yielding the 30S pre-initiation complex (PIC). Upon addition of the 50S ribosomal subunit IF-1, IF-2 and IF-3 are released leaving the mature 70S translation initiation complex. The polypeptide is Translation initiation factor IF-1, chloroplastic (Nandina domestica (Heavenly bamboo)).